A 90-amino-acid polypeptide reads, in one-letter code: Probable Fe(2+)-trafficking protein (90 aa).

It belongs to the Fe(2+)-trafficking protein family. Monomer.

In terms of biological role, could be a mediator in iron transactions between iron acquisition and iron-requiring processes, such as synthesis and/or repair of Fe-S clusters in biosynthetic enzymes. This Yersinia pestis bv. Antiqua (strain Antiqua) protein is Probable Fe(2+)-trafficking protein.